Here is a 210-residue protein sequence, read N- to C-terminus: Thioredoxin-like 3-1, chloroplastic (210 aa).

Residues 81-210 (WRLKAFWSNI…EVRELINKFV (130 aa)) form the Thioredoxin domain. Catalysis depends on nucleophile residues C130 and C133. Cysteines 130 and 133 form a disulfide.

Belongs to the thioredoxin family.

The protein resides in the plastid. Its subcellular location is the chloroplast stroma. Functionally, probable thiol-disulfide oxidoreductase that may participate in various redox reactions. The chain is Thioredoxin-like 3-1, chloroplastic (WCRKC1) from Arabidopsis thaliana (Mouse-ear cress).